A 309-amino-acid polypeptide reads, in one-letter code: 4-hydroxy-3-methylbut-2-enyl diphosphate reductase (309 aa).

C12 contacts [4Fe-4S] cluster. Positions 43 and 77 each coordinate (2E)-4-hydroxy-3-methylbut-2-enyl diphosphate. Dimethylallyl diphosphate-binding residues include H43 and H77. Isopentenyl diphosphate is bound by residues H43 and H77. C99 provides a ligand contact to [4Fe-4S] cluster. A (2E)-4-hydroxy-3-methylbut-2-enyl diphosphate-binding site is contributed by H127. H127 provides a ligand contact to dimethylallyl diphosphate. An isopentenyl diphosphate-binding site is contributed by H127. E129 serves as the catalytic Proton donor. T167 contacts (2E)-4-hydroxy-3-methylbut-2-enyl diphosphate. C197 serves as a coordination point for [4Fe-4S] cluster. (2E)-4-hydroxy-3-methylbut-2-enyl diphosphate-binding residues include S225, S226, N227, and S269. Residues S225, S226, N227, and S269 each contribute to the dimethylallyl diphosphate site. Residues S225, S226, N227, and S269 each contribute to the isopentenyl diphosphate site.

The protein belongs to the IspH family. [4Fe-4S] cluster is required as a cofactor.

The enzyme catalyses isopentenyl diphosphate + 2 oxidized [2Fe-2S]-[ferredoxin] + H2O = (2E)-4-hydroxy-3-methylbut-2-enyl diphosphate + 2 reduced [2Fe-2S]-[ferredoxin] + 2 H(+). It carries out the reaction dimethylallyl diphosphate + 2 oxidized [2Fe-2S]-[ferredoxin] + H2O = (2E)-4-hydroxy-3-methylbut-2-enyl diphosphate + 2 reduced [2Fe-2S]-[ferredoxin] + 2 H(+). Its pathway is isoprenoid biosynthesis; dimethylallyl diphosphate biosynthesis; dimethylallyl diphosphate from (2E)-4-hydroxy-3-methylbutenyl diphosphate: step 1/1. The protein operates within isoprenoid biosynthesis; isopentenyl diphosphate biosynthesis via DXP pathway; isopentenyl diphosphate from 1-deoxy-D-xylulose 5-phosphate: step 6/6. Catalyzes the conversion of 1-hydroxy-2-methyl-2-(E)-butenyl 4-diphosphate (HMBPP) into a mixture of isopentenyl diphosphate (IPP) and dimethylallyl diphosphate (DMAPP). Acts in the terminal step of the DOXP/MEP pathway for isoprenoid precursor biosynthesis. This Wolbachia pipientis wMel protein is 4-hydroxy-3-methylbut-2-enyl diphosphate reductase.